Consider the following 397-residue polypeptide: DNA-directed RNA polymerase subunit Rpo1C (397 aa).

This sequence belongs to the RNA polymerase beta' chain family. Part of the RNA polymerase complex.

The protein resides in the cytoplasm. The catalysed reaction is RNA(n) + a ribonucleoside 5'-triphosphate = RNA(n+1) + diphosphate. In terms of biological role, DNA-dependent RNA polymerase (RNAP) catalyzes the transcription of DNA into RNA using the four ribonucleoside triphosphates as substrates. Forms part of the jaw domain. The chain is DNA-directed RNA polymerase subunit Rpo1C from Pyrococcus horikoshii (strain ATCC 700860 / DSM 12428 / JCM 9974 / NBRC 100139 / OT-3).